A 214-amino-acid polypeptide reads, in one-letter code: Cytochrome b (214 aa).

4 consecutive transmembrane segments (helical) span residues 31–51 (FGSMLLSCSMIQIMTGFFLAI), 75–96 (WIMQNTHAIGASLFFICIYIHI), 111–131 (WLSGTTLLIILMATAFFGYVL), and 176–196 (FFALHFILPFAIISMSSIHIL). Residues histidine 81 and histidine 95 each contribute to the heme b site. Positions 180 and 194 each coordinate heme b. Histidine 199 lines the a ubiquinone pocket.

This sequence belongs to the cytochrome b family. In terms of assembly, the cytochrome bc1 complex contains 3 respiratory subunits (MT-CYB, CYC1 and UQCRFS1), 2 core proteins (UQCRC1 and UQCRC2) and probably 6 low-molecular weight proteins. Heme b serves as cofactor.

The protein resides in the mitochondrion inner membrane. Component of the ubiquinol-cytochrome c reductase complex (complex III or cytochrome b-c1 complex) that is part of the mitochondrial respiratory chain. The b-c1 complex mediates electron transfer from ubiquinol to cytochrome c. Contributes to the generation of a proton gradient across the mitochondrial membrane that is then used for ATP synthesis. This Trimeresurus stejnegeri (Chinese green tree viper) protein is Cytochrome b (MT-CYB).